A 576-amino-acid chain; its full sequence is TRAF-type zinc finger domain-containing protein 1 (576 aa).

N-acetylalanine is present on Ala-2. The segment at 27–103 adopts a TRAF-type zinc-finger fold; it reads IHEIHCQRNI…DLELSVVKLK (77 aa). Residues Ser-278, Ser-320, Ser-326, Ser-327, Ser-409, Ser-415, Ser-430, and Ser-450 each carry the phosphoserine modification. The interval 402–432 is disordered; the sequence is EGIPTQDSQPEDRSPELSRRRVKHQGDLSSG. Basic and acidic residues predominate over residues 411 to 420; that stretch reads PEDRSPELSR. 2 disordered regions span residues 465–491 and 529–576; these read LNSSGPRSDCQRSPPGVLKLNNSGSQD and HGSP…EEEE. A Phosphoserine modification is found at Ser-531. Residues 540–552 show a composition bias toward polar residues; it reads GSRSSRVTPTAAS.

In terms of assembly, interacts with MAVS, TICAM1, TRAF1, TRAF2, TRAF3 and TRAF6. In terms of tissue distribution, expressed in vascular smooth muscle cells.

Its function is as follows. Negative feedback regulator that controls excessive innate immune responses. Regulates both Toll-like receptor 4 (TLR4) and DDX58/RIG1-like helicases (RLH) pathways. May inhibit the LTR pathway by direct interaction with TRAF6 and attenuation of NF-kappa-B activation. May negatively regulate the RLH pathway downstream from MAVS and upstream of NF-kappa-B and IRF3. This is TRAF-type zinc finger domain-containing protein 1 (Trafd1) from Rattus norvegicus (Rat).